The primary structure comprises 616 residues: MKCLRWRSNRHRIYLLVACGALFLLNRHLTQEESRIDEEDEELTQVDVNEDDKKIECEPPGSIESKCIADNGKSMKCWKDEEDVYFPVSYLKKRFDMTGKLGKDGSTFELYTSYAKMRSPDSTYDPLGPFGHFSTYSVETRDRVRCVSAKTDVPMSTQWDPIPYYYPIQISQYGLQHYSRMKLDSISNKSEASPKDDVILGVNSKEWKGAAGMHETTERLFFNDEQMGKVVNISAGAALANAGAYVYLDKSPDLHVISFDWKPYEANSSFTVLAKMKQDDLLVLINYVYSEGNGKCVWQEEERISDDYIVQKPKKDGQVSYSYSYIGNSPIGEWSTVTRDLLVDVARALSSGDNRKKDDNVVLHAGDLRLVSLGFRGELTVKQKITQRREQHSHAFYAAADWLVKNQNDRGGWSVPVERSIAERKLVLPPGWHSAMAQGHGISVLTRAFKHFNDEKYLKSAAKALKLFKINSSDGGVRGEFFGNIWYEEYPTTPGSFVLNGFLYSLIGLYDLSQLELMIDENDETMRAKIQEAQELYSAGVRSLKQLLPLYDTGSGTIYDLRHVALGTAPNLARWDYHAVHVYLLKWIAGIEKDEVLSKTADRWIGYAYGKRAKHN.

Topologically, residues 1–12 are cytoplasmic; it reads MKCLRWRSNRHR. A helical; Signal-anchor for type II membrane protein transmembrane segment spans residues 13–29; that stretch reads IYLLVACGALFLLNRHL. The Extracellular portion of the chain corresponds to 30 to 616; the sequence is TQEESRIDEE…YAYGKRAKHN (587 aa). Substrate contacts are provided by residues Tyr-136, 141–143, and Gln-169; that span reads RDR. 4 N-linked (GlcNAc...) asparagine glycosylation sites follow: Asn-188, Asn-232, Asn-267, and Asn-471. Substrate-binding positions include Tyr-504, Arg-562, and 574–580; that span reads RWDYHAV.

The protein belongs to the D-glucuronyl C5-epimerase family. In terms of assembly, homodimer. In terms of tissue distribution, expression in comma stage embryos is strong in the hypodermis and intestine and weaker in the head region. In late embryos, larval, and adult stages, expressed primarily in hypodermis and intestine.

The protein resides in the cell membrane. The protein localises to the secreted. It localises to the extracellular space. It is found in the extracellular matrix. Its subcellular location is the basement membrane. The enzyme catalyses [heparosan-N-sulfate](n) = [heparan-N-sulfate](n). The protein operates within glycan metabolism; heparan sulfate biosynthesis. It functions in the pathway glycan metabolism; heparin biosynthesis. Converts D-glucuronic acid residues adjacent to N-sulfate sugar residues to L-iduronic acids. Plays a role in the early migration of AQR and PQR neurons, which descend from the Q neuroblasts. In Caenorhabditis elegans, this protein is D-glucuronyl C5-epimerase (hse-5).